The primary structure comprises 233 residues: Large ribosomal subunit protein uL1 (233 aa).

The protein belongs to the universal ribosomal protein uL1 family. Part of the 50S ribosomal subunit.

Its function is as follows. Binds directly to 23S rRNA. The L1 stalk is quite mobile in the ribosome, and is involved in E site tRNA release. In terms of biological role, protein L1 is also a translational repressor protein, it controls the translation of the L11 operon by binding to its mRNA. This chain is Large ribosomal subunit protein uL1, found in Vibrio parahaemolyticus serotype O3:K6 (strain RIMD 2210633).